Here is a 962-residue protein sequence, read N- to C-terminus: Translation initiation factor IF-2 (962 aa).

The segment at 99 to 366 (VKAAQTQAAP…KKGKKLKLEP (268 aa)) is disordered. A compositionally biased stretch (basic and acidic residues) spans 117–141 (DAAKARAEAAARAEARAKAEAEAAK). Over residues 145 to 155 (AKAGNKAKPAA) the composition is skewed to low complexity. The span at 173–216 (KPAEESKAEKAQADKMPSEKPAEPKEKAAKPKHERNGKGKDAKK) shows a compositional bias: basic and acidic residues. Positions 219 to 234 (KPAAPAVPQPVVSAEE) are enriched in low complexity. The span at 235-269 (QAQRDEEARRAAALRAHQEALLKEKQERQARREAM) shows a compositional bias: basic and acidic residues. The segment covering 270-283 (KQQAEQQAKAAQEA) has biased composition (low complexity). Basic and acidic residues-rich tracts occupy residues 314 to 327 (AKKE…DEGQ) and 338 to 354 (GGRD…ERVR). One can recognise a tr-type G domain in the interval 462–631 (PRPPVVTVMG…LLEAEVLELT (170 aa)). The G1 stretch occupies residues 471-478 (GHVDHGKT). 471-478 (GHVDHGKT) serves as a coordination point for GTP. A G2 region spans residues 496 to 500 (GITQH). The G3 stretch occupies residues 517-520 (DTPG). Residues 517-521 (DTPGH) and 571-574 (NKID) each bind GTP. Residues 571-574 (NKID) are G4. The tract at residues 607–609 (SAK) is G5.

The protein belongs to the TRAFAC class translation factor GTPase superfamily. Classic translation factor GTPase family. IF-2 subfamily.

It localises to the cytoplasm. Its function is as follows. One of the essential components for the initiation of protein synthesis. Protects formylmethionyl-tRNA from spontaneous hydrolysis and promotes its binding to the 30S ribosomal subunits. Also involved in the hydrolysis of GTP during the formation of the 70S ribosomal complex. The protein is Translation initiation factor IF-2 of Neisseria meningitidis serogroup B (strain ATCC BAA-335 / MC58).